The primary structure comprises 479 residues: Protein C-ets-2 (479 aa).

In terms of domain architecture, PNT spans 88 to 173 (DTFSGFTKEQ…EHLEQMIKDS (86 aa)). A DNA-binding region (ETS) is located at residues 373–453 (IQLWQFLLEL…SGKRYVYRFV (81 aa)).

The protein belongs to the ETS family.

Its subcellular location is the nucleus. Its function is as follows. Probable transcription factor. The protein is Protein C-ets-2 (ETS2) of Gallus gallus (Chicken).